Consider the following 315-residue polypeptide: Kiwa protein KwaB (315 aa).

Component of antiviral defense system Kiwa, composed of KwaA and KwaB. Expression of Kiwa in E.coli (strain MG1655) confers resistance to phages lambda and SECphi18. The polypeptide is Kiwa protein KwaB (Escherichia coli O55:H7 (strain RM12579 / EPEC)).